A 241-amino-acid polypeptide reads, in one-letter code: 2,3,4,5-tetrahydropyridine-2,6-dicarboxylate N-acetyltransferase (241 aa).

It belongs to the transferase hexapeptide repeat family. DapH subfamily.

The catalysed reaction is (S)-2,3,4,5-tetrahydrodipicolinate + acetyl-CoA + H2O = L-2-acetamido-6-oxoheptanedioate + CoA. It participates in amino-acid biosynthesis; L-lysine biosynthesis via DAP pathway; LL-2,6-diaminopimelate from (S)-tetrahydrodipicolinate (acetylase route): step 1/3. In terms of biological role, catalyzes the transfer of an acetyl group from acetyl-CoA to tetrahydrodipicolinate. This Thermoanaerobacter pseudethanolicus (strain ATCC 33223 / 39E) (Clostridium thermohydrosulfuricum) protein is 2,3,4,5-tetrahydropyridine-2,6-dicarboxylate N-acetyltransferase.